The primary structure comprises 519 residues: uncharacterized protein (519 aa).

The next 14 helical transmembrane spans lie at 37-57, 82-102, 114-134, 146-166, 175-195, 209-229, 240-260, 269-289, 309-329, 337-357, 373-393, 402-422, 434-454, and 475-495; these read ISMSLFHEIVFVFIACTAQLM, GQLSWFPASYSLTVGTFILIA, MFVLGYIWFCIWSLISGFSYY, ALTGIAPAFLLPNALALLGRV, LIFALFGATAPNGFLLGSVFS, WTTAIVCIVFAIIGYFAIPHI, FDYLGAFFGVSGLVLINFSWN, VPYVYILLIIGFLSLVVFVLV, CVLICVAAGWACFGIWMYYLW, FATPLLVTAQLTPVGISGCAA, IMVVSMIAFTVGTILIATAPI, FVSIIVTPWGMDMSFPAATLM, IAASLVSTVVNYSISIGLGIA, and AWYMGTGFGGLGVCVAILTVF.

The protein belongs to the major facilitator superfamily.

The protein localises to the endoplasmic reticulum. It is found in the membrane. This is an uncharacterized protein from Schizosaccharomyces pombe (strain 972 / ATCC 24843) (Fission yeast).